A 487-amino-acid chain; its full sequence is Serine/threonine-protein kinase 4 (487 aa).

N-acetylmethionine is present on M1. T3 bears the Phosphothreonine mark. In terms of domain architecture, Protein kinase spans 30–281 (FDVLEKLGEG…ATQLLQHPFV (252 aa)). ATP contacts are provided by residues 36–44 (LGEGSYGSV) and K59. Residue D149 is the Proton acceptor of the active site. T183 is modified (phosphothreonine; by autocatalysis). At S265 the chain carries Phosphoserine. Positions 290 to 310 (LRDLINEAMDVKLKRQESQQR) form a coiled coil. The segment covering 303–312 (KRQESQQREV) has biased composition (basic and acidic residues). Positions 303 to 332 (KRQESQQREVDQDDEENSEEDEMDSGTMVR) are disordered. Residues 313 to 326 (DQDDEENSEEDEMD) show a composition bias toward acidic residues. Phosphoserine is present on S320. T340 and T367 each carry phosphothreonine. At T387 the chain carries Phosphothreonine; by PKB/AKT1. A phosphoserine mark is found at S410 and S414. Y433 carries the post-translational modification Phosphotyrosine. The SARAH domain maps to 433–480 (YEFLKSWTVEDLQKRLLALDPMMEQEIEEIRQKYQSKRQPILDAIEAK).

The protein belongs to the protein kinase superfamily. STE Ser/Thr protein kinase family. STE20 subfamily. In terms of assembly, homodimer; mediated via the coiled-coil region. Interacts with NORE1, which inhibits autoactivation. Interacts with and stabilizes SAV1. Interacts with RASSF1. Interacts with FOXO3. Interacts with RASSF2 (via SARAH domain). Interacts with AR, PKB/AKT1, TNNI3 and SIRT1. Interacts with DLG5 (via PDZ domain 3). Interacts with MARK3 and SCRIB in the presence of DLG5. The cofactor is Mg(2+). Post-translationally, autophosphorylated on serine and threonine residues. Phosphorylation at Thr-387 by PKB/AKT1, leads to inhibition of its: kinase activity, nuclear translocation and autophosphorylation at Thr-183. It also diminishes its cleavage by caspases and its ability to phosphorylate FOXO3. Proteolytically cleaved by caspase-3 during apoptosis at Asp-326 and Asp-349 resulting in a 37 kDa or a 39 kDa subunit respectively. The 39 kDa subunit is further cleaved into the 37 kDa form. Proteolytic cleavage results in kinase activation and nuclear translocation of the truncated form (MST1/N). It is less likely that cleavage at Asp-349 is a prerequisite for activation as this site is not conserved in the murine ortholog.

The protein resides in the cytoplasm. It is found in the nucleus. The enzyme catalyses L-seryl-[protein] + ATP = O-phospho-L-seryl-[protein] + ADP + H(+). It catalyses the reaction L-threonyl-[protein] + ATP = O-phospho-L-threonyl-[protein] + ADP + H(+). Inhibited by the C-terminal non-catalytic region. Activated by caspase-cleavage. Full activation also requires homodimerization and autophosphorylation of Thr-183. Activated by RASSF1 which acts by preventing its dephosphorylation. Stress-activated, pro-apoptotic kinase which, following caspase-cleavage, enters the nucleus and induces chromatin condensation followed by internucleosomal DNA fragmentation. Key component of the Hippo signaling pathway which plays a pivotal role in organ size control and tumor suppression by restricting proliferation and promoting apoptosis. The core of this pathway is composed of a kinase cascade wherein STK3/MST2 and STK4/MST1, in complex with its regulatory protein SAV1, phosphorylates and activates LATS1/2 in complex with its regulatory protein MOB1, which in turn phosphorylates and inactivates YAP1 oncoprotein and WWTR1/TAZ. Phosphorylation of YAP1 by LATS2 inhibits its translocation into the nucleus to regulate cellular genes important for cell proliferation, cell death, and cell migration. STK3/MST2 and STK4/MST1 are required to repress proliferation of mature hepatocytes, to prevent activation of facultative adult liver stem cells (oval cells), and to inhibit tumor formation. Phosphorylates 'Ser-14' of histone H2B (H2BS14ph) during apoptosis. Phosphorylates FOXO3 upon oxidative stress, which results in its nuclear translocation and cell death initiation. Phosphorylates MOBKL1A, MOBKL1B and RASSF2. Phosphorylates TNNI3 (cardiac Tn-I) and alters its binding affinity to TNNC1 (cardiac Tn-C) and TNNT2 (cardiac Tn-T). Phosphorylates FOXO1 on 'Ser-212' and regulates its activation and stimulates transcription of PMAIP1 in a FOXO1-dependent manner. Phosphorylates SIRT1 and inhibits SIRT1-mediated p53/TP53 deacetylation, thereby promoting p53/TP53 dependent transcription and apoptosis upon DNA damage. Acts as an inhibitor of PKB/AKT1. Phosphorylates AR on 'Ser-650' and suppresses its activity by intersecting with PKB/AKT1 signaling and antagonizing formation of AR-chromatin complexes. The sequence is that of Serine/threonine-protein kinase 4 (STK4) from Papio anubis (Olive baboon).